Here is a 39-residue protein sequence, read N- to C-terminus: MLRTLVVFAPIIAALAWVIFNIQKPAREQFNRDFLGKKD.

Residues 4–22 traverse the membrane as a helical segment; sequence TLVVFAPIIAALAWVIFNI.

It belongs to the PsbY family. As to quaternary structure, PSII is composed of 1 copy each of membrane proteins PsbA, PsbB, PsbC, PsbD, PsbE, PsbF, PsbH, PsbI, PsbJ, PsbK, PsbL, PsbM, PsbT, PsbX, PsbY, Psb30/Ycf12, peripheral proteins PsbO, CyanoQ (PsbQ), PsbU, PsbV and a large number of cofactors. It forms dimeric complexes.

It is found in the cellular thylakoid membrane. In terms of biological role, loosely associated component of the core of photosystem II (PSII), it is not always seen in crystals. PSII is a light-driven water plastoquinone oxidoreductase, using light energy to abstract electrons from H(2)O, generating a proton gradient subsequently used for ATP formation. The protein is Photosystem II reaction center protein Y of Prochlorococcus marinus (strain MIT 9515).